A 311-amino-acid polypeptide reads, in one-letter code: Tyrosine recombinase XerD (311 aa).

A Core-binding (CB) domain is found at 3 to 88; that stretch reads DMSAAYVEAF…ALRQFYKFLY (86 aa). One can recognise a Tyr recombinase domain in the interval 109 to 298; that stretch reads TLPKTLSIED…LEERLHDLVQ (190 aa). Catalysis depends on residues R156, K180, H250, R253, and H276. Y285 (O-(3'-phospho-DNA)-tyrosine intermediate) is an active-site residue.

This sequence belongs to the 'phage' integrase family. XerD subfamily. As to quaternary structure, forms a cyclic heterotetrameric complex composed of two molecules of XerC and two molecules of XerD.

It localises to the cytoplasm. Its function is as follows. Site-specific tyrosine recombinase, which acts by catalyzing the cutting and rejoining of the recombining DNA molecules. The XerC-XerD complex is essential to convert dimers of the bacterial chromosome into monomers to permit their segregation at cell division. It also contributes to the segregational stability of plasmids. The protein is Tyrosine recombinase XerD of Rhizobium meliloti (strain 1021) (Ensifer meliloti).